The chain runs to 264 residues: Thymidylate synthase (264 aa).

Residues Arg-21 and 126–127 (RR) contribute to the dUMP site. The active-site Nucleophile is Cys-146. Residues 166–169 (RSAD), Asn-177, and 207–209 (HLY) contribute to the dUMP site. Asp-169 contacts (6R)-5,10-methylene-5,6,7,8-tetrahydrofolate. Residue Ala-263 participates in (6R)-5,10-methylene-5,6,7,8-tetrahydrofolate binding.

This sequence belongs to the thymidylate synthase family. Bacterial-type ThyA subfamily. Homodimer.

It is found in the cytoplasm. The catalysed reaction is dUMP + (6R)-5,10-methylene-5,6,7,8-tetrahydrofolate = 7,8-dihydrofolate + dTMP. It functions in the pathway pyrimidine metabolism; dTTP biosynthesis. In terms of biological role, catalyzes the reductive methylation of 2'-deoxyuridine-5'-monophosphate (dUMP) to 2'-deoxythymidine-5'-monophosphate (dTMP) while utilizing 5,10-methylenetetrahydrofolate (mTHF) as the methyl donor and reductant in the reaction, yielding dihydrofolate (DHF) as a by-product. This enzymatic reaction provides an intracellular de novo source of dTMP, an essential precursor for DNA biosynthesis. This Afipia carboxidovorans (strain ATCC 49405 / DSM 1227 / KCTC 32145 / OM5) (Oligotropha carboxidovorans) protein is Thymidylate synthase.